We begin with the raw amino-acid sequence, 162 residues long: Auxin-responsive protein SAUR36 (162 aa).

This sequence belongs to the ARG7 family. As to expression, expressed in embryo, endosperm, growing hypocotyls and shoot apical meristems.

In terms of biological role, acts a positive regulator of leaf senescence and may mediate auxin-induced leaf senescence. Plays a role in the regulation of seed germination by gibberellins and abscisic acid (ABA). Plays a role in the regulation of light-dependent hypocotyl elongation. The protein is Auxin-responsive protein SAUR36 of Arabidopsis thaliana (Mouse-ear cress).